We begin with the raw amino-acid sequence, 321 residues long: 37 kDa cell surface protein (321 aa).

The protein localises to the secreted. The protein resides in the cell wall. The chain is 37 kDa cell surface protein (CSP37) from Candida albicans (Yeast).